The sequence spans 509 residues: ATP synthase subunit alpha (509 aa).

G169–T176 contacts ATP.

This sequence belongs to the ATPase alpha/beta chains family. F-type ATPases have 2 components, CF(1) - the catalytic core - and CF(0) - the membrane proton channel. CF(1) has five subunits: alpha(3), beta(3), gamma(1), delta(1), epsilon(1). CF(0) has four main subunits: a(1), b(1), b'(1) and c(9-12).

The protein resides in the cell inner membrane. The enzyme catalyses ATP + H2O + 4 H(+)(in) = ADP + phosphate + 5 H(+)(out). Its function is as follows. Produces ATP from ADP in the presence of a proton gradient across the membrane. The alpha chain is a regulatory subunit. This Erythrobacter litoralis (strain HTCC2594) protein is ATP synthase subunit alpha.